Reading from the N-terminus, the 157-residue chain is Small ribosomal subunit protein uS7 (157 aa).

It belongs to the universal ribosomal protein uS7 family. Part of the 30S ribosomal subunit. Contacts proteins S9 and S11.

In terms of biological role, one of the primary rRNA binding proteins, it binds directly to 16S rRNA where it nucleates assembly of the head domain of the 30S subunit. Is located at the subunit interface close to the decoding center, probably blocks exit of the E-site tRNA. This Borreliella burgdorferi (strain ATCC 35210 / DSM 4680 / CIP 102532 / B31) (Borrelia burgdorferi) protein is Small ribosomal subunit protein uS7.